Here is a 704-residue protein sequence, read N- to C-terminus: MARQVGLDKVRNIGIMAHIDAGKTTTTERILYYTGRLHKMGEVHDGGATMDWMEQEKERGITITSAATTCFWEPRYGIYKGKNHRINIIDTPGHVDFTVEVERSLRVLDGAVALFCAVGGVEPQSETVWRQANKYNVPRVAYVNKMDRVGADFFETVKSIKERLGANPVPVQIPIGQGEMFAGVVDLIRMKGIIYDKEDGSTYEEVAIPHDLESEAKHWRINMLEAVSEVDETLLEKYLEGEDITEDEVRKVLRQATLAGTIIPTLCGSSFKNKGVQFMLDTVVECLPSPVDVGNVAGHHPDTDEDIVREPKDEAPFAGLAFKIATDPFVGKLTFFRVYSGVLKAGSYILNSTTGKKERIGRLLQMHSNKREDLTEVHAGDIAAAVGMKDVKTGDTMCDEAKPIILEKMVFPEPVIQIAIEPKTKADSDKLGMSLAKLAEEDPTFRVSSDEETGQTLIAGMGELHLEVLVDRLKREFKVEANVGQPQVAYRETIKKAVDHEGKFVRQSGGKGQFGLVNLKVEPLEQGKGYEFVDAIKGGVIPKEYIPAVSNGIQEAMKDGVIAGYPVQDVKVTLYDGKYHDVDSSEMAFKIAGSIGFKGAVRKADPVLLEPLMKVEVITPEEYLGDVMGDLSSRRGHIEGMGDRAGAQFVKAKVPLSEMFGYSTVLRSMTQGRANYTMEFEQYHEVPKNIAEALQEKNSAKNAD.

Positions 8–291 (DKVRNIGIMA…TVVECLPSPV (284 aa)) constitute a tr-type G domain. GTP contacts are provided by residues 17-24 (AHIDAGKT), 90-94 (DTPGH), and 144-147 (NKMD).

It belongs to the TRAFAC class translation factor GTPase superfamily. Classic translation factor GTPase family. EF-G/EF-2 subfamily.

The protein resides in the cytoplasm. Functionally, catalyzes the GTP-dependent ribosomal translocation step during translation elongation. During this step, the ribosome changes from the pre-translocational (PRE) to the post-translocational (POST) state as the newly formed A-site-bound peptidyl-tRNA and P-site-bound deacylated tRNA move to the P and E sites, respectively. Catalyzes the coordinated movement of the two tRNA molecules, the mRNA and conformational changes in the ribosome. This Prosthecochloris aestuarii (strain DSM 271 / SK 413) protein is Elongation factor G.